We begin with the raw amino-acid sequence, 217 residues long: Large ribosomal subunit protein uL29m (217 aa).

The protein belongs to the universal ribosomal protein uL29 family. In terms of assembly, component of the mitochondrial large ribosomal subunit. Mature mitochondrial ribosomes consist of a small (37S) and a large (54S) subunit. The 37S subunit contains at least 33 different proteins and 1 molecule of RNA (15S). The 54S subunit contains at least 45 different proteins and 1 molecule of RNA (21S).

The protein resides in the mitochondrion. The polypeptide is Large ribosomal subunit protein uL29m (mrpl4) (Aspergillus clavatus (strain ATCC 1007 / CBS 513.65 / DSM 816 / NCTC 3887 / NRRL 1 / QM 1276 / 107)).